The chain runs to 497 residues: Proline--tRNA ligase (497 aa).

The protein belongs to the class-II aminoacyl-tRNA synthetase family. ProS type 3 subfamily. Homodimer.

The protein localises to the cytoplasm. It catalyses the reaction tRNA(Pro) + L-proline + ATP = L-prolyl-tRNA(Pro) + AMP + diphosphate. Its function is as follows. Catalyzes the attachment of proline to tRNA(Pro) in a two-step reaction: proline is first activated by ATP to form Pro-AMP and then transferred to the acceptor end of tRNA(Pro). In Bacteroides fragilis (strain ATCC 25285 / DSM 2151 / CCUG 4856 / JCM 11019 / LMG 10263 / NCTC 9343 / Onslow / VPI 2553 / EN-2), this protein is Proline--tRNA ligase.